The primary structure comprises 334 residues: Phosphate acyltransferase (334 aa).

The protein belongs to the PlsX family. As to quaternary structure, homodimer. Probably interacts with PlsY.

Its subcellular location is the cytoplasm. It catalyses the reaction a fatty acyl-[ACP] + phosphate = an acyl phosphate + holo-[ACP]. Its pathway is lipid metabolism; phospholipid metabolism. Catalyzes the reversible formation of acyl-phosphate (acyl-PO(4)) from acyl-[acyl-carrier-protein] (acyl-ACP). This enzyme utilizes acyl-ACP as fatty acyl donor, but not acyl-CoA. The protein is Phosphate acyltransferase of Thermotoga petrophila (strain ATCC BAA-488 / DSM 13995 / JCM 10881 / RKU-1).